Here is a 330-residue protein sequence, read N- to C-terminus: G-protein coupled receptor 74 (330 aa).

7 helical membrane-spanning segments follow: residues Leu50–Leu70, Phe85–Ile105, Met121–Asp141, Trp160–Leu180, Val210–Tyr230, Met252–Ile272, and Leu295–Leu315. Cys117 and Cys195 are oxidised to a cystine.

It belongs to the G-protein coupled receptor 1 family.

Its subcellular location is the host membrane. This is G-protein coupled receptor 74 (74) from Equus caballus (Horse).